Consider the following 123-residue polypeptide: MAGGLKKAMVYLGLAEDNQELHSAPSGMSHLRRVPHPKQQMSEIFTFHPKKYSEVSGIVERFRQNIPVIIDMSQLSDTDARRMIDFASGLSQGLVGKIERVVGKVFLLSPEHISISTESKKEE.

The protein belongs to the SepF family. In terms of assembly, homodimer. Interacts with FtsZ.

The protein resides in the cytoplasm. Functionally, cell division protein that is part of the divisome complex and is recruited early to the Z-ring. Probably stimulates Z-ring formation, perhaps through the cross-linking of FtsZ protofilaments. Its function overlaps with FtsA. The chain is Cell division protein SepF from Tropheryma whipplei (strain TW08/27) (Whipple's bacillus).